The following is a 570-amino-acid chain: Glutamate--tRNA ligase (570 aa).

Positions 107–117 (PNPDFVLHLGS) match the 'HIGH' region motif.

Belongs to the class-I aminoacyl-tRNA synthetase family. Glutamate--tRNA ligase type 2 subfamily.

The protein resides in the cytoplasm. The enzyme catalyses tRNA(Glu) + L-glutamate + ATP = L-glutamyl-tRNA(Glu) + AMP + diphosphate. Catalyzes the attachment of glutamate to tRNA(Glu) in a two-step reaction: glutamate is first activated by ATP to form Glu-AMP and then transferred to the acceptor end of tRNA(Glu). The chain is Glutamate--tRNA ligase from Pyrobaculum aerophilum (strain ATCC 51768 / DSM 7523 / JCM 9630 / CIP 104966 / NBRC 100827 / IM2).